The primary structure comprises 329 residues: GMP reductase (329 aa).

C178 (thioimidate intermediate) is an active-site residue. 207-230 (VIADGGIRTHGDIAKSIRMGATMV) serves as a coordination point for NADP(+).

Belongs to the IMPDH/GMPR family. GuaC type 2 subfamily.

The catalysed reaction is IMP + NH4(+) + NADP(+) = GMP + NADPH + 2 H(+). Its function is as follows. Catalyzes the irreversible NADPH-dependent deamination of GMP to IMP. It functions in the conversion of nucleobase, nucleoside and nucleotide derivatives of G to A nucleotides, and in maintaining the intracellular balance of A and G nucleotides. This chain is GMP reductase, found in Lactococcus lactis subsp. cremoris (strain SK11).